A 430-amino-acid chain; its full sequence is Asparagine--tRNA ligase (430 aa).

This sequence belongs to the class-II aminoacyl-tRNA synthetase family. As to quaternary structure, homodimer.

It localises to the cytoplasm. It carries out the reaction tRNA(Asn) + L-asparagine + ATP = L-asparaginyl-tRNA(Asn) + AMP + diphosphate + H(+). The chain is Asparagine--tRNA ligase from Listeria monocytogenes serovar 1/2a (strain ATCC BAA-679 / EGD-e).